A 307-amino-acid polypeptide reads, in one-letter code: Ribosomal RNA small subunit methyltransferase H (307 aa).

S-adenosyl-L-methionine-binding positions include 38–40 (GGH), aspartate 58, phenylalanine 82, aspartate 99, and glutamine 106.

This sequence belongs to the methyltransferase superfamily. RsmH family.

It localises to the cytoplasm. The catalysed reaction is cytidine(1402) in 16S rRNA + S-adenosyl-L-methionine = N(4)-methylcytidine(1402) in 16S rRNA + S-adenosyl-L-homocysteine + H(+). In terms of biological role, specifically methylates the N4 position of cytidine in position 1402 (C1402) of 16S rRNA. In Variovorax paradoxus (strain S110), this protein is Ribosomal RNA small subunit methyltransferase H.